The sequence spans 460 residues: Serine/threonine-protein kinase UL13 (460 aa).

The tract at residues M1–D37 is disordered. The segment covering V12 to R25 has biased composition (basic and acidic residues). Positions L95–A460 constitute a Protein kinase domain. ATP is bound by residues L101–V109 and K120. D219 functions as the Proton acceptor in the catalytic mechanism.

Belongs to the protein kinase superfamily. Ser/Thr protein kinase family. Autophosphorylated.

It is found in the virion tegument. The protein resides in the host nucleus. It carries out the reaction L-seryl-[protein] + ATP = O-phospho-L-seryl-[protein] + ADP + H(+). It catalyses the reaction L-threonyl-[protein] + ATP = O-phospho-L-threonyl-[protein] + ADP + H(+). Multifunctional serine/threonine kinase that plays a role in several processes including egress of virus particles from the nucleus, modulation of the actin cytoskeleton and regulation of viral and cellular gene expression. Regulates the nuclear localization of viral envelopment factors UL34 and UL31 homologs, by phosphorylating the US3 kinase homolog, indicating a role in nuclear egress. Disrupts host nuclear lamins, including LMNA and LMNB1. Phosphorylates the viral Fc receptor composed of glycoproteins E (gE) and I (gI). Phosphorylation of glycoprotein E (gE) by UL13 homolog alters its subcellular localization, from the host early endosome to the plasma membrane. Participates in the transcriptional regulation of cellular and viral mRNAs mainly by phosphorylating the viral transcriptional regulator ICP22 homolog. This is Serine/threonine-protein kinase UL13 (UL13) from Amazona oratrix (yellow-headed parrot).